The following is a 151-amino-acid chain: Protein A151R (151 aa).

It belongs to the asfivirus A151R family. As to quaternary structure, monomer. Homodimer. Interacts with protein B119L. Interacts with membrane protein E248R. It depends on Zn(2+) as a cofactor.

In terms of biological role, may participate in a redox cascade for the formation of disulfide bonds in viral proteins. The protein is Protein A151R of Ornithodoros (relapsing fever ticks).